We begin with the raw amino-acid sequence, 159 residues long: Putative ribosomal RNA large subunit methyltransferase H (159 aa).

S-adenosyl-L-methionine-binding positions include Leu-76, Gly-108, and 127 to 132 (LSAMTF).

It belongs to the RNA methyltransferase RlmH family.

The protein localises to the cytoplasm. The enzyme catalyses pseudouridine(1915) in 23S rRNA + S-adenosyl-L-methionine = N(3)-methylpseudouridine(1915) in 23S rRNA + S-adenosyl-L-homocysteine + H(+). Its function is as follows. Specifically methylates the pseudouridine at position 1915 (m3Psi1915) in 23S rRNA. In Methanospirillum hungatei JF-1 (strain ATCC 27890 / DSM 864 / NBRC 100397 / JF-1), this protein is Putative ribosomal RNA large subunit methyltransferase H.